Consider the following 633-residue polypeptide: Chaperone protein dnaK2 (633 aa).

Threonine 197 is modified (phosphothreonine; by autocatalysis). The segment at serine 600–lysine 633 is disordered. Residues aspartate 608 to glutamate 619 show a composition bias toward low complexity. Over residues glycine 620–lysine 633 the composition is skewed to acidic residues.

This sequence belongs to the heat shock protein 70 family.

Acts as a chaperone. In Prochlorococcus marinus (strain SARG / CCMP1375 / SS120), this protein is Chaperone protein dnaK2 (dnaK2).